Consider the following 210-residue polypeptide: 3-oxo-tetronate 4-phosphate decarboxylase (210 aa).

E74 acts as the Proton acceptor in catalysis. Positions 74, 93, and 95 each coordinate Zn(2+). Catalysis depends on Y120, which acts as the Proton donor. H160 contacts Zn(2+).

The protein belongs to the aldolase class II family. AraD/FucA subfamily. Zn(2+) serves as cofactor.

It carries out the reaction 3-dehydro-4-O-phospho-D-erythronate + H(+) = dihydroxyacetone phosphate + CO2. It catalyses the reaction 3-dehydro-4-O-phospho-L-erythronate + H(+) = dihydroxyacetone phosphate + CO2. Catalyzes the decarboxylation of 3-oxo-tetronate 4-phosphate to dihydroxyacetone phosphate (DHAP) and CO(2). This Haemophilus influenzae (strain ATCC 51907 / DSM 11121 / KW20 / Rd) protein is 3-oxo-tetronate 4-phosphate decarboxylase.